The sequence spans 74 residues: Major structural pilin EpdE (74 aa).

A propeptide spanning residues 1-12 (MKFLEKLTSKKG) is cleaved from the precursor. Glutamine 13 is subject to Pyrrolidone carboxylic acid. A QXSXEXXXL motif is present at residues 13–21 (QIAMELGIL).

The N-terminus is cleaved by the prepilin peptidase EppA, which recognizes the class III signal sequence. In terms of processing, N-glycosylated. Glycosylated with an N-linked branched pentasaccharide glycan. May contain glycans at three sites. Glycosylation is AglB-dependent. The N-glycosylation does not occur unless the signal peptide has been cleaved first.

Its subcellular location is the secreted. The protein resides in the cell surface. It localises to the fimbrium. Major component of the type IV-like pili. This is Major structural pilin EpdE from Methanococcus maripaludis (strain DSM 14266 / JCM 13030 / NBRC 101832 / S2 / LL).